A 491-amino-acid polypeptide reads, in one-letter code: Acetyl-coenzyme A carboxylase carboxyl transferase subunit beta (491 aa).

One can recognise a CoA carboxyltransferase N-terminal domain in the interval 132–491; the sequence is LWNQCENCFI…ISELLNLHAL (360 aa). The Zn(2+) site is built by Cys136, Cys139, Cys155, and Cys158. A C4-type zinc finger spans residues 136-158; it reads CENCFIPNYKKVLKSNMQICEEC. The segment covering 252-262 has biased composition (basic and acidic residues); that stretch reads EKVEEWTKPDL. Disordered regions lie at residues 252-273 and 279-298; these read EKVE…DEER and DKGE…EDDD. A compositionally biased stretch (acidic residues) spans 284–298; that stretch reads SQEIEDSEANDEDDD.

The protein belongs to the AccD/PCCB family. In terms of assembly, acetyl-CoA carboxylase is a heterohexamer composed of biotin carboxyl carrier protein, biotin carboxylase and 2 subunits each of ACCase subunit alpha and ACCase plastid-coded subunit beta (accD). The cofactor is Zn(2+).

The protein localises to the plastid. The enzyme catalyses N(6)-carboxybiotinyl-L-lysyl-[protein] + acetyl-CoA = N(6)-biotinyl-L-lysyl-[protein] + malonyl-CoA. Its pathway is lipid metabolism; malonyl-CoA biosynthesis; malonyl-CoA from acetyl-CoA: step 1/1. In terms of biological role, component of the acetyl coenzyme A carboxylase (ACC) complex. Biotin carboxylase (BC) catalyzes the carboxylation of biotin on its carrier protein (BCCP) and then the CO(2) group is transferred by the transcarboxylase to acetyl-CoA to form malonyl-CoA. The protein is Acetyl-coenzyme A carboxylase carboxyl transferase subunit beta of Cuscuta gronovii (Common dodder).